A 465-amino-acid chain; its full sequence is Plasma alpha-L-fucosidase (465 aa).

An N-terminal signal peptide occupies residues methionine 1 to alanine 26. N-linked (GlcNAc...) asparagine glycans are attached at residues asparagine 169 and asparagine 237. Serine 299 is modified (phosphoserine). N-linked (GlcNAc...) asparagine glycosylation occurs at asparagine 375.

Belongs to the glycosyl hydrolase 29 family. Homotetramer.

The protein resides in the secreted. It catalyses the reaction an alpha-L-fucoside + H2O = L-fucose + an alcohol. Its function is as follows. Alpha-L-fucosidase is responsible for hydrolyzing the alpha-1,6-linked fucose joined to the reducing-end N-acetylglucosamine of the carbohydrate moieties of glycoproteins. In Pongo abelii (Sumatran orangutan), this protein is Plasma alpha-L-fucosidase (FUCA2).